A 488-amino-acid polypeptide reads, in one-letter code: Palmitoleoyl-protein carboxylesterase notum1' (488 aa).

The signal sequence occupies residues 1-19; that stretch reads MAGTLCVTLLLLLSTIAVG. The N-linked (GlcNAc...) asparagine glycan is linked to asparagine 90. Active-site charge relay system residues include serine 226, aspartate 334, and histidine 383.

It belongs to the pectinacetylesterase family. Notum subfamily. Expressed in the egg and through cleavage to gastrulation stages. Enriched in the animal (prospective ectoderm) and dorsal regions in early gastrula. Shows a dynamic expression during embryogenesis, in particular during neural induction and antero-posterior (AP) patterning.

It is found in the secreted. The enzyme catalyses [Wnt protein]-O-(9Z)-hexadecenoyl-L-serine + H2O = [Wnt protein]-L-serine + (9Z)-hexadecenoate + H(+). Functionally, carboxylesterase that acts as a key negative regulator of the Wnt signaling pathway by specifically mediating depalmitoleoylation of WNT proteins. Serine palmitoleoylation of WNT proteins is required for efficient binding to frizzled receptors. Functions in the prospective ectoderm and is required for neural induction. This Xenopus laevis (African clawed frog) protein is Palmitoleoyl-protein carboxylesterase notum1'.